The primary structure comprises 244 residues: uncharacterized protein (244 aa).

6 consecutive transmembrane segments (helical) span residues 5–27, 37–59, 87–106, 116–138, 159–181, and 196–218; these read KFAL…LLAV, IVMV…SRFL, LVFI…FYYG, LSLF…FFVA, FWIW…VQPS, and GVFN…RMVA.

Its subcellular location is the cell membrane. This is an uncharacterized protein from Archaeoglobus fulgidus (strain ATCC 49558 / DSM 4304 / JCM 9628 / NBRC 100126 / VC-16).